The chain runs to 158 residues: Endoribonuclease YbeY (158 aa).

Zn(2+)-binding residues include H124, H128, and H134.

Belongs to the endoribonuclease YbeY family. The cofactor is Zn(2+).

It localises to the cytoplasm. Single strand-specific metallo-endoribonuclease involved in late-stage 70S ribosome quality control and in maturation of the 3' terminus of the 16S rRNA. The chain is Endoribonuclease YbeY from Latilactobacillus sakei subsp. sakei (strain 23K) (Lactobacillus sakei subsp. sakei).